The chain runs to 229 residues: Enolase-phosphatase E1 (229 aa).

Belongs to the HAD-like hydrolase superfamily. MasA/MtnC family. Monomer. Mg(2+) is required as a cofactor.

The catalysed reaction is 5-methylsulfanyl-2,3-dioxopentyl phosphate + H2O = 1,2-dihydroxy-5-(methylsulfanyl)pent-1-en-3-one + phosphate. The protein operates within amino-acid biosynthesis; L-methionine biosynthesis via salvage pathway; L-methionine from S-methyl-5-thio-alpha-D-ribose 1-phosphate: step 3/6. It functions in the pathway amino-acid biosynthesis; L-methionine biosynthesis via salvage pathway; L-methionine from S-methyl-5-thio-alpha-D-ribose 1-phosphate: step 4/6. Its function is as follows. Bifunctional enzyme that catalyzes the enolization of 2,3-diketo-5-methylthiopentyl-1-phosphate (DK-MTP-1-P) into the intermediate 2-hydroxy-3-keto-5-methylthiopentenyl-1-phosphate (HK-MTPenyl-1-P), which is then dephosphorylated to form the acireductone 1,2-dihydroxy-3-keto-5-methylthiopentene (DHK-MTPene). The sequence is that of Enolase-phosphatase E1 from Yersinia pseudotuberculosis serotype O:1b (strain IP 31758).